The following is a 169-amino-acid chain: Putative outer membrane protein BBA03 (169 aa).

The protein localises to the cell outer membrane. This Borreliella burgdorferi (strain ATCC 35210 / DSM 4680 / CIP 102532 / B31) (Borrelia burgdorferi) protein is Putative outer membrane protein BBA03.